The following is a 403-amino-acid chain: Ribosomal RNA large subunit methyltransferase I (403 aa).

The PUA domain occupies 9-88 (YPRLVLSKGR…EPVDIAFFTR (80 aa)).

Belongs to the methyltransferase superfamily. RlmI family.

The protein localises to the cytoplasm. The enzyme catalyses cytidine(1962) in 23S rRNA + S-adenosyl-L-methionine = 5-methylcytidine(1962) in 23S rRNA + S-adenosyl-L-homocysteine + H(+). Its function is as follows. Specifically methylates the cytosine at position 1962 (m5C1962) of 23S rRNA. The polypeptide is Ribosomal RNA large subunit methyltransferase I (Salmonella arizonae (strain ATCC BAA-731 / CDC346-86 / RSK2980)).